A 242-amino-acid chain; its full sequence is Uroporphyrinogen-III C-methyltransferase (242 aa).

Residues Pro12, 88 to 90 (GGD), 118 to 119 (TS), and Met170 contribute to the S-adenosyl-L-homocysteine site.

Belongs to the precorrin methyltransferase family. In terms of assembly, homodimer.

The enzyme catalyses uroporphyrinogen III + 2 S-adenosyl-L-methionine = precorrin-2 + 2 S-adenosyl-L-homocysteine + H(+). The protein operates within cofactor biosynthesis; adenosylcobalamin biosynthesis; precorrin-2 from uroporphyrinogen III: step 1/1. Catalyzes the two successive C-2 and C-7 methylation reactions involved in the conversion of uroporphyrinogen III to precorrin-2 via the intermediate formation of precorrin-1. It is a step in the biosynthesis of both cobalamin (vitamin B12) and coenzyme F430. The sequence is that of Uroporphyrinogen-III C-methyltransferase (cobA) from Methanocaldococcus jannaschii (strain ATCC 43067 / DSM 2661 / JAL-1 / JCM 10045 / NBRC 100440) (Methanococcus jannaschii).